The primary structure comprises 1079 residues: Electrogenic sodium bicarbonate cotransporter 1 (1079 aa).

Positions 1–62 (MEDEAALDRG…EKKEKERVSE (62 aa)) are required for interaction with AHCYL1. The Cytoplasmic segment spans residues 1 to 466 (MEDEAALDRG…FASDFYDALN (466 aa)). The residue at position 30 (Y30) is a Phosphotyrosine. The segment covering 39-52 (YRRRRRHKRKAGHR) has biased composition (basic residues). The segment at 39–78 (YRRRRRHKRKAGHREKKEKERVSENYSDKSDVENADESSS) is disordered. Residues 53–70 (EKKEKERVSENYSDKSDV) are compositionally biased toward basic and acidic residues. Phosphoserine occurs at positions 61, 65, 68, 223, 232, 233, and 245. The disordered stretch occupies residues 238–265 (FTSPENGSPAMTHRNLTSSSLNDISDKP). 2 positions are modified to phosphothreonine: T249 and T254. The span at 251–260 (RNLTSSSLND) shows a compositional bias: polar residues. Phosphoserine is present on residues S256, S257, and S262. A helical membrane pass occupies residues 467 to 491 (IQALSAILFIYLATVTNAITFGGLL). Residues 492-501 (GDATDNMQGV) lie on the Extracellular side of the membrane. Residues 502-520 (LESFLGTAVSGAVFCLFAG) traverse the membrane as a helical segment. Position 521 (Q521) is a topological domain, cytoplasmic. A discontinuously helical transmembrane segment spans residues 522 to 542 (PLTILSSTGPVLVFERLLFNF). Over 543-550 (SKDHNFDY) the chain is Extracellular. Residues 551–571 (LEFRLWIGLWSAFLCLILVAT) traverse the membrane as a helical segment. Residues 572–585 (DASFLVQYFTRFTE) lie on the Cytoplasmic side of the membrane. A helical membrane pass occupies residues 586–609 (EGFSSLISFIFIYDAFKKMIKLAD). Topologically, residues 610 to 692 (YYPINSNFKV…GNNCDFVPDI (83 aa)) are extracellular. A helical transmembrane segment spans residues 693 to 710 (TLMSFILFLGTYTSSMAL). At 711 to 725 (KKFKTSRYFPTTARK) the chain is on the cytoplasmic side. Residues 726 to 745 (LISDFAIILSILIFCVIDAL) form a helical membrane-spanning segment. The Extracellular portion of the chain corresponds to 746-779 (VGVDTPKLIVPSEFKPTSPNRGWFVPPFGGNPWW). An interaction with CA4 region spans residues 748 to 779 (VDTPKLIVPSEFKPTSPNRGWFVPPFGGNPWW). Residues 780 to 807 (VYLAAAIPALLVTILIFMDQQITAVIVN) traverse the membrane as a helical segment. At 808 to 819 (RKEHKLKKGAGY) the chain is on the cytoplasmic side. Residues 820-836 (HLDLFWVAILMVVCSFM) form a helical membrane-spanning segment. A topological domain (extracellular) is located at residue A837. The discontinuously helical transmembrane segment at 838–855 (LPWYVAATVISIAHIDSL) threads the bilayer. At 856–877 (KMETETSAPGEQPKFLGVREQR) the chain is on the cytoplasmic side. The chain crosses the membrane as a helical span at residues 878-894 (VTGTLVFILTGLSVFMA). Residues 895–901 (PILKFIP) are Extracellular-facing. A helical transmembrane segment spans residues 902-918 (MPVLYGVFLYMGVASLN). The Cytoplasmic segment spans residues 919 to 960 (GVQFMDRLKLLLMPLKHQPDFIYLRHVPLRRVHLFTFLQVLC). An intramembrane region (discontinuously helical) is located at residues 961–986 (LALLWILKSTVAAIIFPVMILALVAV). The Cytoplasmic segment spans residues 987-1079 (RKGMDYLFSQ…PTFLERHTSC (93 aa)). The segment at 1002–1004 (LDD) is CA2-binding. Positions 1012–1079 (KKKEDEKKKK…PTFLERHTSC (68 aa)) are disordered. S1026 is modified (phosphoserine; by PKA). S1029 is subject to Phosphoserine. Positions 1030-1033 (DSDD) are CA2-binding. Phosphoserine is present on residues S1034 and S1044. The tract at residues 1057 to 1059 (FLS) is required for basolateral targeting. Residues 1062 to 1079 (KPSDRERSPTFLERHTSC) show a composition bias toward basic and acidic residues. The residue at position 1069 (S1069) is a Phosphoserine.

This sequence belongs to the anion exchanger (TC 2.A.31) family. In terms of assembly, homodimer. Interacts with CA2/carbonic anhydrase 2 and CA4/carbonic anhydrase 4 which may regulate transporter activity. Isoform 1 but not isoform 2 interacts with AHCYL1 (via PEST domain when phosphorylated); the interaction increases SLC4A4 isoform 1 activity. Interacts with AHCYL2. Post-translationally, phosphorylation of Ser-1026 by PKA increases the binding of CA2 and changes the Na(+):HCO3(-) stoichiometry of the transporter from 3:1 to 2:1. Phosphorylated in presence of STK39 and dephosphorylated in presence of PP1 phosphatase; phosphorylation seems to inhibit SLC4A4 activity. N-glycosylated. May not be necessary for the transporter basic functions. Expressed in vas deferens epithelia (at protein level).

The protein resides in the basolateral cell membrane. It localises to the cell membrane. It carries out the reaction 2 hydrogencarbonate(out) + Na(+)(out) = 2 hydrogencarbonate(in) + Na(+)(in). It catalyses the reaction 3 hydrogencarbonate(out) + Na(+)(out) = 3 hydrogencarbonate(in) + Na(+)(in). Its function is as follows. Electrogenic sodium/bicarbonate cotransporter with a Na(+):HCO3(-) stoichiometry varying from 1:2 to 1:3. May regulate bicarbonate influx/efflux at the basolateral membrane of cells and regulate intracellular pH. In Sus scrofa (Pig), this protein is Electrogenic sodium bicarbonate cotransporter 1 (SLC4A4).